The following is a 160-amino-acid chain: CXXC motif containing zinc binding protein (160 aa).

Cys-33, Cys-36, Cys-67, and Cys-70 together coordinate Zn(2+).

Belongs to the UPF0587 family.

The protein is CXXC motif containing zinc binding protein (czib) of Xenopus laevis (African clawed frog).